A 119-amino-acid chain; its full sequence is Chorion class CA protein ERA.5 (119 aa).

A signal peptide spans 1–21; the sequence is MSTYTFVLFCLQICLIQNVYS. Residues 22 to 55 are left arm; the sequence is QCLGRVGPGGPPVGPYGGPLGGPGYGPVGYGGCG. The tract at residues 56–103 is central domain; sequence GYGGSGIGNVAVAGELPVAGSSAVMGQVPVIGAVEFAGPACAVGSVSI. Residues 104 to 119 form a right arm region; sequence SGACGPTCGCGGSPYY.

This sequence belongs to the chorion protein family.

This protein is one of many from the eggshell of the silk moth. This Bombyx mori (Silk moth) protein is Chorion class CA protein ERA.5 (ERA.5).